Here is a 35-residue protein sequence, read N- to C-terminus: Mu/omega-theraphotoxin-Tap1a (35 aa).

Intrachain disulfides connect Cys-3-Cys-18, Cys-10-Cys-23, and Cys-17-Cys-30.

This sequence belongs to the neurotoxin 10 (Hwtx-1) family. 59 (Tltx) subfamily. In terms of tissue distribution, expressed by the venom gland.

The protein localises to the secreted. Gating-modifier toxin that inhibits both sodium (Nav) and calcium (Cav3) channels by inducing hyperpolarizing shift in voltage-dependence of activation and steady state inactivation. Inhibits Nav1.1/SCN1A, Nav1.2/SCN2A, Nav1.3/SCN3A, Nav1.6/SCN6A, Nav1.7/SCN9A and Cav3.1/CACNA1G sodium and calcium channels at nanomolar concentrations (IC(50)=81-301 nM). Surprisingly, selectively slows fast inactivation of Nav1.3/SCN3A. Also shows moderate inhibition of Cav3.2/CACNA1H calcium channels (IC(50)=1233 nM). Ex vivo, nearly ablates neuronal mechanosensitivity in afferent fibers innervating the colon and the bladder. In vivo, in a mouse model of irritable bowel syndrome, intracolonic administration of the toxin reverses colonic mechanical hypersensitivity. The protein is Mu/omega-theraphotoxin-Tap1a of Theraphosa apophysis (Goliath pinkfoot tarantula).